The following is a 160-amino-acid chain: MNIAVYPGSFDPITNGHLDIIKRASQVFDKVVVGILVNPDKKGLFSIEEREKLISRVVKDMPNVEVRSFSGLLVDFMKEENIKVIIKGLRAMSDFEYEFQMALMNKKLNPDIETLFMMTCAQYSYLSSSSIKQVAMFGGCIKGLVPDEIIEDICKKSNNK.

Residue Ser9 coordinates substrate. Residues 9–10 (SF) and His17 each bind ATP. Substrate contacts are provided by Lys41, Leu73, and Lys87. Residues 88–90 (GLR), Glu98, and 123–129 (YSYLSSS) contribute to the ATP site.

This sequence belongs to the bacterial CoaD family. In terms of assembly, homohexamer. The cofactor is Mg(2+).

Its subcellular location is the cytoplasm. It catalyses the reaction (R)-4'-phosphopantetheine + ATP + H(+) = 3'-dephospho-CoA + diphosphate. The protein operates within cofactor biosynthesis; coenzyme A biosynthesis; CoA from (R)-pantothenate: step 4/5. Functionally, reversibly transfers an adenylyl group from ATP to 4'-phosphopantetheine, yielding dephospho-CoA (dPCoA) and pyrophosphate. The sequence is that of Phosphopantetheine adenylyltransferase from Clostridium tetani (strain Massachusetts / E88).